Here is a 62-residue protein sequence, read N- to C-terminus: Large ribosomal subunit protein uL30 (62 aa).

It belongs to the universal ribosomal protein uL30 family. As to quaternary structure, part of the 50S ribosomal subunit.

In Roseobacter denitrificans (strain ATCC 33942 / OCh 114) (Erythrobacter sp. (strain OCh 114)), this protein is Large ribosomal subunit protein uL30.